A 119-amino-acid polypeptide reads, in one-letter code: Large ribosomal subunit protein bL20 (119 aa).

It belongs to the bacterial ribosomal protein bL20 family.

Binds directly to 23S ribosomal RNA and is necessary for the in vitro assembly process of the 50S ribosomal subunit. It is not involved in the protein synthesizing functions of that subunit. The polypeptide is Large ribosomal subunit protein bL20 (Thiobacillus denitrificans (strain ATCC 25259 / T1)).